The sequence spans 263 residues: Indolethylamine N-methyltransferase (263 aa).

Lys13 bears the N6-succinyllysine mark. S-adenosyl-L-methionine-binding positions include Tyr20, Tyr25, 63 to 64 (GS), Tyr69, Asp85, and Asn90. Lys96 is modified (N6-succinyllysine). S-adenosyl-L-methionine-binding positions include 142-143 (DV) and Leu163.

Belongs to the class I-like SAM-binding methyltransferase superfamily. NNMT/PNMT/TEMT family. As to quaternary structure, monomer.

Its subcellular location is the cytoplasm. The enzyme catalyses a tertiary amine + S-adenosyl-L-methionine = a methylated tertiary amine + S-adenosyl-L-homocysteine + H(+). It carries out the reaction a secondary amine + S-adenosyl-L-methionine = a methylated secondary amine + S-adenosyl-L-homocysteine + H(+). It catalyses the reaction a primary amine + S-adenosyl-L-methionine = a methylated primary amine + S-adenosyl-L-homocysteine + H(+). The catalysed reaction is dimethyl sulfide + S-adenosyl-L-methionine = trimethylsulfonium + S-adenosyl-L-homocysteine. In terms of biological role, catalyzes the N-methylation of tryptamine and structurally related compounds. Functions as a thioether S-methyltransferase and is active with a variety of thioethers and the corresponding selenium and tellurium compounds, including 3-methylthiopropionaldehyde, dimethyl selenide, dimethyl telluride, 2-methylthioethylamine, 2-methylthioethanol, methyl-n-propyl sulfide and diethyl sulfide. Plays an important role in the detoxification of selenium compounds. This chain is Indolethylamine N-methyltransferase (INMT), found in Pongo abelii (Sumatran orangutan).